Here is a 197-residue protein sequence, read N- to C-terminus: Imidazoleglycerol-phosphate dehydratase (197 aa).

It belongs to the imidazoleglycerol-phosphate dehydratase family.

It localises to the cytoplasm. The enzyme catalyses D-erythro-1-(imidazol-4-yl)glycerol 3-phosphate = 3-(imidazol-4-yl)-2-oxopropyl phosphate + H2O. The protein operates within amino-acid biosynthesis; L-histidine biosynthesis; L-histidine from 5-phospho-alpha-D-ribose 1-diphosphate: step 6/9. The sequence is that of Imidazoleglycerol-phosphate dehydratase from Erythrobacter litoralis (strain HTCC2594).